The following is a 729-amino-acid chain: Polyribonucleotide nucleotidyltransferase (729 aa).

2 residues coordinate Mg(2+): Asp509 and Asp515. Positions 575–634 (PRVISVKIPVDKIGEVIGPKGKMINQIQADSGAEITVEDDGTIYIGAVDGPSAESARSAI) constitute a KH domain. An S1 motif domain is found at 646–718 (GERYLGTIVK…SRGKISLSPS (73 aa)).

The protein belongs to the polyribonucleotide nucleotidyltransferase family. Requires Mg(2+) as cofactor.

The protein resides in the cytoplasm. The enzyme catalyses RNA(n+1) + phosphate = RNA(n) + a ribonucleoside 5'-diphosphate. Its function is as follows. Involved in mRNA degradation. Catalyzes the phosphorolysis of single-stranded polyribonucleotides processively in the 3'- to 5'-direction. The protein is Polyribonucleotide nucleotidyltransferase of Frankia casuarinae (strain DSM 45818 / CECT 9043 / HFP020203 / CcI3).